The primary structure comprises 98 residues: NADH-ubiquinone oxidoreductase chain 4L (98 aa).

Helical transmembrane passes span 1-21 (MSMV…GLLV), 30-50 (LLCL…TILI), and 61-81 (IILL…LVMV).

The protein belongs to the complex I subunit 4L family. Core subunit of respiratory chain NADH dehydrogenase (Complex I) which is composed of 45 different subunits.

It is found in the mitochondrion inner membrane. The catalysed reaction is a ubiquinone + NADH + 5 H(+)(in) = a ubiquinol + NAD(+) + 4 H(+)(out). Core subunit of the mitochondrial membrane respiratory chain NADH dehydrogenase (Complex I) which catalyzes electron transfer from NADH through the respiratory chain, using ubiquinone as an electron acceptor. Part of the enzyme membrane arm which is embedded in the lipid bilayer and involved in proton translocation. This is NADH-ubiquinone oxidoreductase chain 4L (MT-ND4L) from Pagophilus groenlandicus (Harp seal).